The chain runs to 883 residues: Serine/threonine-protein kinase greatwall (883 aa).

Met1 carries the N-acetylmethionine modification. The disordered stretch occupies residues 1–23 (MEPTMGGEMESGGGAATGECVNR). The Protein kinase domain maps to 35–839 (FTIVKPISRG…MKELKHHPLF (805 aa)). Residues 41-49 (ISRGAFGKV) and Lys62 each bind ATP. Asp156 functions as the Proton acceptor in the catalytic mechanism. Residues Thr209 and Thr224 each carry the phosphothreonine modification. A Phosphoserine modification is found at Ser295. The tract at residues 298-317 (RLATSSTSSPSHTFISSMES) is disordered. The segment covering 301–314 (TSSTSSPSHTFISS) has biased composition (low complexity). 2 positions are modified to phosphoserine: Ser373 and Ser456. The interval 511-530 (ENVGSSFTDKHQTPEKSPVP) is disordered. Phosphothreonine is present on Thr523. Residues Ser556 and Ser560 each carry the phosphoserine modification. Positions 569–597 (IHMDSDSSFPGISIMESPLGGQSLDPDKN) are disordered. 3 positions are modified to phosphoserine: Ser635, Ser661, and Ser672. Residues 706-737 (RSDMPYQQTPNQVKSETPYRTPKSVRRGAAPV) are disordered. The span at 710–720 (PYQQTPNQVKS) shows a compositional bias: polar residues. Residue Thr726 is modified to Phosphothreonine. Ser729 bears the Phosphoserine mark. Phosphothreonine; by CDK1 is present on Thr745. In terms of domain architecture, AGC-kinase C-terminal spans 840–883 (SGVDWENLQHQKMPFIPQPDDETDTSYFEARNNAQHLTVSGFSL). Ser879 and Ser882 each carry phosphoserine.

Belongs to the protein kinase superfamily. AGC Ser/Thr protein kinase family. Post-translationally, phosphorylation at Thr-745 by CDK1 during M phase activates its kinase activity. Maximum phosphorylation occurs in prometaphase.

The protein resides in the cytoplasm. The protein localises to the cytoskeleton. Its subcellular location is the microtubule organizing center. It is found in the centrosome. It localises to the nucleus. The enzyme catalyses L-seryl-[protein] + ATP = O-phospho-L-seryl-[protein] + ADP + H(+). The catalysed reaction is L-threonyl-[protein] + ATP = O-phospho-L-threonyl-[protein] + ADP + H(+). In terms of biological role, serine/threonine kinase that plays a key role in M phase by acting as a regulator of mitosis entry and maintenance. Acts by promoting the inactivation of protein phosphatase 2A (PP2A) during M phase: does not directly inhibit PP2A but acts by mediating phosphorylation and subsequent activation of ARPP19 and ENSA at 'Ser-62' and 'Ser-67', respectively. ARPP19 and ENSA are phosphatase inhibitors that specifically inhibit the PPP2R2D (PR55-delta) subunit of PP2A. Inactivation of PP2A during M phase is essential to keep cyclin-B1-CDK1 activity high. Following DNA damage, it is also involved in checkpoint recovery by being inhibited. The chain is Serine/threonine-protein kinase greatwall (MASTL) from Bos taurus (Bovine).